A 118-amino-acid chain; its full sequence is Large ribosomal subunit protein bL19 (118 aa).

Belongs to the bacterial ribosomal protein bL19 family.

Its function is as follows. This protein is located at the 30S-50S ribosomal subunit interface and may play a role in the structure and function of the aminoacyl-tRNA binding site. In Salinispora tropica (strain ATCC BAA-916 / DSM 44818 / JCM 13857 / NBRC 105044 / CNB-440), this protein is Large ribosomal subunit protein bL19.